The chain runs to 154 residues: MAARLYCQLDPSRDVLCLRPVGAESRGRPLSGPLGTLSSPSPSAVPADHGAHLSLRGLPVCAFSSAGPCALRFTSARCMETTVNAHQILPKVLHKRTLGLPAMSTTDLEAYFKDCVFKDWEELGEEIRLKVFVLGGCRHKLVCAPAPCNFFTSA.

The mitochondrial targeting sequence stretch occupies residues 68-117; that stretch reads PCALRFTSARCMETTVNAHQILPKVLHKRTLGLPAMSTTDLEAYFKDCVF.

Belongs to the orthohepadnavirus protein X family. In terms of assembly, may form homodimer. May interact with host CEBPA, CFLAR, CREB1, DDB1, E4F1, HBXIP, HSPD1/HSP60, NFKBIA, POLR2E and SMAD4. Interacts with host SMC5-SMC6 complex and induces its degradation. Interacts with host TRPC4AP; leading to prevent ubiquitination of TRPC4AP. Interacts with host PLSCR1; this interaction promotes ubiquitination and degradation of HBx and impairs HBx-mediated cell proliferation. A fraction may be phosphorylated in insect cells and HepG2 cells, a human hepatoblastoma cell line. Phosphorylated in vitro by host protein kinase C or mitogen-activated protein kinase. N-acetylated in insect cells.

Its subcellular location is the host cytoplasm. It localises to the host nucleus. The protein resides in the host mitochondrion. In terms of biological role, multifunctional protein that plays a role in silencing host antiviral defenses and promoting viral transcription. Does not seem to be essential for HBV infection. May be directly involved in development of cirrhosis and liver cancer (hepatocellular carcinoma). Most of cytosolic activities involve modulation of cytosolic calcium. The effect on apoptosis is controversial depending on the cell types in which the studies have been conducted. May induce apoptosis by localizing in mitochondria and causing loss of mitochondrial membrane potential. May also modulate apoptosis by binding host CFLAR, a key regulator of the death-inducing signaling complex (DISC). Promotes viral transcription by using the host E3 ubiquitin ligase DDB1 to target the SMC5-SMC6 complex to proteasomal degradation. This host complex would otherwise bind to viral episomal DNA, and prevents its transcription. Moderately stimulates transcription of many different viral and cellular transcription elements. Promoters and enhancers stimulated by HBx contain DNA binding sites for NF-kappa-B, AP-1, AP-2, c-EBP, ATF/CREB, or the calcium-activated factor NF-AT. This chain is Protein X, found in Hepatitis B virus genotype A2 subtype adw2 (strain Rutter 1979) (HBV-A).